The primary structure comprises 464 residues: MVKLYNTLTKKKEPFTPIDKDHIKMYVCGPTVYDTAHIGNARSIVVYDVLFRLLKFCYGKVTYVRNITDIDDKIINAANEKNSNIESISKYYTKTFHEDMESINCAEPTYEPKATENIDNIIKLIESLLQAGHAYESNKHVYFSVESYPEYGVLSGKKIDELNYGSRVEVGENKKHPGDFVLWKPANETDYKLSSHWNSPWGEGRPGWHIECSAMSYAYLGKDFDIHGGGIDLQFPHHENEIAQSKSAFAESTFAKYWVHNGFLTVNEEKMSKSLFNIVKVRDLLDSGIKGEVIRYALLKTHYRKPLDWTENVISESQETLNKFYRLLRSTCIEESDTEVSKDFIEALKNDLNIPEAVAILHEMATEINKTSNEYEKLKLTKKFVKSARFIGILESSYQEWFASGVSHQEIERLIDLRKVAKQNKDYDTADKIREQLKQMGVTISDNEDGTTTWYGKLSPIVYR.

Zn(2+) is bound at residue Cys28. Residues 30–40 (PTVYDTAHIGN) carry the 'HIGH' region motif. Positions 212, 237, and 241 each coordinate Zn(2+). The 'KMSKS' region signature appears at 270–274 (KMSKS). Lys273 contacts ATP.

Belongs to the class-I aminoacyl-tRNA synthetase family. In terms of assembly, monomer. Requires Zn(2+) as cofactor.

The protein resides in the cytoplasm. The catalysed reaction is tRNA(Cys) + L-cysteine + ATP = L-cysteinyl-tRNA(Cys) + AMP + diphosphate. In Wolbachia pipientis subsp. Culex pipiens (strain wPip), this protein is Cysteine--tRNA ligase.